Consider the following 334-residue polypeptide: Anthranilate phosphoribosyltransferase (334 aa).

Residues G79, 82-83 (GD), S87, 89-92 (NIST), 107-115 (KAGNRSISS), and S119 contribute to the 5-phospho-alpha-D-ribose 1-diphosphate site. G79 provides a ligand contact to anthranilate. S91 is a binding site for Mg(2+). N110 provides a ligand contact to anthranilate. An anthranilate-binding site is contributed by R165. Mg(2+)-binding residues include D224 and E225.

Belongs to the anthranilate phosphoribosyltransferase family. In terms of assembly, homodimer. It depends on Mg(2+) as a cofactor.

It catalyses the reaction N-(5-phospho-beta-D-ribosyl)anthranilate + diphosphate = 5-phospho-alpha-D-ribose 1-diphosphate + anthranilate. Its pathway is amino-acid biosynthesis; L-tryptophan biosynthesis; L-tryptophan from chorismate: step 2/5. Catalyzes the transfer of the phosphoribosyl group of 5-phosphorylribose-1-pyrophosphate (PRPP) to anthranilate to yield N-(5'-phosphoribosyl)-anthranilate (PRA). This is Anthranilate phosphoribosyltransferase from Streptococcus thermophilus (strain CNRZ 1066).